Reading from the N-terminus, the 92-residue chain is UPF0250 protein Pmen_3793 (92 aa).

The protein belongs to the UPF0250 family.

The sequence is that of UPF0250 protein Pmen_3793 from Ectopseudomonas mendocina (strain ymp) (Pseudomonas mendocina).